The following is a 341-amino-acid chain: Small ribosomal subunit protein uS3 (341 aa).

Residues 38–106 (IRRMMTRGME…QVQLNILEVK (69 aa)) enclose the KH type-2 domain. Disordered stretches follow at residues 224–246 (RAVR…LETA) and 274–341 (PAGQ…TKEG). 2 stretches are compositionally biased toward low complexity: residues 285–303 (AEQP…VTGE) and 311–333 (AAPA…DAPS).

This sequence belongs to the universal ribosomal protein uS3 family. Part of the 30S ribosomal subunit. Forms a tight complex with proteins S10 and S14.

Functionally, binds the lower part of the 30S subunit head. Binds mRNA in the 70S ribosome, positioning it for translation. This Acidothermus cellulolyticus (strain ATCC 43068 / DSM 8971 / 11B) protein is Small ribosomal subunit protein uS3.